Consider the following 139-residue polypeptide: Small ribosomal subunit protein uS11 (139 aa).

The interval 118–139 (EDVTPIPHDGTRPKGGRRGRRV) is disordered.

Belongs to the universal ribosomal protein uS11 family. In terms of assembly, part of the 30S ribosomal subunit.

Functionally, located on the platform of the 30S subunit. The chain is Small ribosomal subunit protein uS11 from Thermococcus sibiricus (strain DSM 12597 / MM 739).